A 469-amino-acid chain; its full sequence is 3-isopropylmalate dehydratase large subunit (469 aa).

Residues C349, C410, and C413 each coordinate [4Fe-4S] cluster.

This sequence belongs to the aconitase/IPM isomerase family. LeuC type 1 subfamily. In terms of assembly, heterodimer of LeuC and LeuD. It depends on [4Fe-4S] cluster as a cofactor.

It carries out the reaction (2R,3S)-3-isopropylmalate = (2S)-2-isopropylmalate. The protein operates within amino-acid biosynthesis; L-leucine biosynthesis; L-leucine from 3-methyl-2-oxobutanoate: step 2/4. Its function is as follows. Catalyzes the isomerization between 2-isopropylmalate and 3-isopropylmalate, via the formation of 2-isopropylmaleate. The polypeptide is 3-isopropylmalate dehydratase large subunit (Neisseria meningitidis serogroup C (strain 053442)).